We begin with the raw amino-acid sequence, 374 residues long: Inner membrane transport permease YhhJ (374 aa).

The Cytoplasmic portion of the chain corresponds to 1 to 22 (MRHLRNIFNLGIKELRSLLGDK). A helical membrane pass occupies residues 23–43 (AMLTLIVFSFTVSVYSSATVT). The Periplasmic portion of the chain corresponds to 44–172 (PGSLNLAPIA…TRMRFNPNLD (129 aa)). The region spanning 133 to 369 (NGYIQNIING…TIALLRFRKT (237 aa)) is the ABC transmembrane type-2 domain. Residues 173–193 (PAWFGGVMAIINNITMLAIVL) form a helical membrane-spanning segment. Residues 194 to 229 (TGSALIREREHGTVEHLLVMPITPFEIMMAKIWSMG) are Cytoplasmic-facing. Residues 230–250 (LVVLVVSGLSLVLMVKGVLGV) traverse the membrane as a helical segment. At 251 to 255 (PIEGS) the chain is on the periplasmic side. The chain crosses the membrane as a helical span at residues 256-276 (IPLFMLGVALSLFATTSIGIF). Residues 277-283 (MGTIARS) lie on the Cytoplasmic side of the membrane. Residues 284–304 (MPQLGLLVILVLLPLQMLSGG) form a helical membrane-spanning segment. The Periplasmic portion of the chain corresponds to 305–342 (STPRESMPQMVQDIMLTMPTTHFVSLAQAILYRGAGFE). A helical transmembrane segment spans residues 343-363 (IVWPQFLTLMAIGGAFFTIAL). Topologically, residues 364–374 (LRFRKTIGTMA) are cytoplasmic.

Belongs to the ABC-2 integral membrane protein family.

Its subcellular location is the cell inner membrane. The polypeptide is Inner membrane transport permease YhhJ (yhhJ) (Escherichia coli (strain K12)).